The primary structure comprises 267 residues: MVIKLEFEFLLLLPLLIIVGFIVGILGSLFGIGGGFLVAPILTFIFDYFGIPDGVKFAVGTSLFVVFINSIISIFRHAKIKNINWKASITIGIISLVFSYFSGFLVVNFIDSAILKKLFGIFLIANAIYMAKSHHIDKISDREDKLEPFILCGVITGFLSGLFGIGGGIVIIPILAMAKYPVKRAVAISVGVIPLTSIGGLISYLTANTEGYIYNIGYVSIPIALIMAIPIIYSSKLGIKINQKISPKHLRIMLSSILGVMGLFMLL.

A run of 7 helical transmembrane segments spans residues 10-30 (LLLLPLLIIVGFIVGILGSLF), 31-51 (GIGGGFLVAPILTFIFDYFGI), 55-75 (VKFAVGTSLFVVFINSIISIF), 87-107 (ASITIGIISLVFSYFSGFLVV), 158-178 (FLSGLFGIGGGIVIIPILAMA), 185-205 (AVAISVGVIPLTSIGGLISYL), and 213-233 (IYNIGYVSIPIALIMAIPIIY).

It belongs to the 4-toluene sulfonate uptake permease (TSUP) (TC 2.A.102) family.

Its subcellular location is the cell membrane. The chain is Probable membrane transporter protein MJ0441 from Methanocaldococcus jannaschii (strain ATCC 43067 / DSM 2661 / JAL-1 / JCM 10045 / NBRC 100440) (Methanococcus jannaschii).